Consider the following 853-residue polypeptide: DNA mismatch repair protein MutS (853 aa).

614-621 (GPNMGGKS) is an ATP binding site.

This sequence belongs to the DNA mismatch repair MutS family.

Its function is as follows. This protein is involved in the repair of mismatches in DNA. It is possible that it carries out the mismatch recognition step. This protein has a weak ATPase activity. The protein is DNA mismatch repair protein MutS of Escherichia coli O81 (strain ED1a).